We begin with the raw amino-acid sequence, 89 residues long: Small ribosomal subunit protein uS15 (89 aa).

It belongs to the universal ribosomal protein uS15 family. In terms of assembly, part of the 30S ribosomal subunit. Forms a bridge to the 50S subunit in the 70S ribosome, contacting the 23S rRNA.

In terms of biological role, one of the primary rRNA binding proteins, it binds directly to 16S rRNA where it helps nucleate assembly of the platform of the 30S subunit by binding and bridging several RNA helices of the 16S rRNA. Functionally, forms an intersubunit bridge (bridge B4) with the 23S rRNA of the 50S subunit in the ribosome. This Chelativorans sp. (strain BNC1) protein is Small ribosomal subunit protein uS15.